Here is a 258-residue protein sequence, read N- to C-terminus: Acetylglutamate kinase (258 aa).

Substrate is bound by residues Gly44–Gly45, Arg66, and Asn158. Residues Asp181–Leu186 and Ile209–Thr211 contribute to the ATP site.

Belongs to the acetylglutamate kinase family. ArgB subfamily. Homodimer.

It localises to the cytoplasm. It carries out the reaction N-acetyl-L-glutamate + ATP = N-acetyl-L-glutamyl 5-phosphate + ADP. It participates in amino-acid biosynthesis; L-arginine biosynthesis; N(2)-acetyl-L-ornithine from L-glutamate: step 2/4. In terms of biological role, catalyzes the ATP-dependent phosphorylation of N-acetyl-L-glutamate. The protein is Acetylglutamate kinase of Shigella flexneri serotype 5b (strain 8401).